Consider the following 1138-residue polypeptide: Serine/threonine/tyrosine-interacting-like protein 2 (1138 aa).

A disordered region spans residues 1-20; it reads MATGGDAEEEQVVPNEEDEA. Positions 132 to 280 constitute a Tyrosine-protein phosphatase domain; the sequence is NEVDEVWPNV…LRELNEKLME (149 aa). Residue Ser291 is modified to Phosphoserine. 8 disordered regions span residues 309 to 336, 348 to 473, 486 to 515, 552 to 575, 592 to 618, 660 to 694, 761 to 800, and 850 to 1117; these read EEED…VTLI, EWRK…TWDM, ARKY…DDEE, KKDS…GEKN, QKKV…AKKR, AAPS…LPNL, SGCL…VRGT, and FKKK…DEAI. Positions 316–331 are enriched in polar residues; it reads SHLSGSSLGKASQVSK. The residue at position 373 (Ser373) is a Phosphoserine. The segment covering 376-385 has biased composition (acidic residues); that stretch reads DGDDCEDEDV. Residues 386–409 are compositionally biased toward basic and acidic residues; sequence ERIIQEWQSRNERYQAKGREQWNR. The residue at position 427 (Thr427) is a Phosphothreonine. Phosphoserine is present on residues Ser503 and Ser555. Composition is skewed to basic and acidic residues over residues 552 to 567 and 595 to 614; these read KKDS…HGTE and VGSE…DTVL. The segment covering 672–687 has biased composition (polar residues); it reads SVLSTQSHRSHASNMP. Residues 773 to 788 show a composition bias toward low complexity; it reads SSDVQSVLSSTSSLTS. Over residues 858-871 the composition is skewed to acidic residues; sequence DEDMSVGDRDEDTD. A Phosphoserine modification is found at Ser862. Positions 878–897 are enriched in polar residues; the sequence is RYSSRSNSQKPETDASSSLA. Ser929 is subject to Phosphoserine. Over residues 936 to 947 the composition is skewed to low complexity; that stretch reads SGSSRGRYTRSS. The span at 965–977 shows a compositional bias: basic and acidic residues; that stretch reads RSQEQDTSFHEAN. Phosphoserine is present on Ser966. The segment covering 980–992 has biased composition (polar residues); that stretch reads TVRNTSRFSSSTT. Residue Ser1016 is modified to Phosphoserine. 2 stretches are compositionally biased toward basic and acidic residues: residues 1035 to 1059 and 1074 to 1091; these read PEPR…KSDF and RSEE…EEGR. Residues 1095–1106 are compositionally biased toward polar residues; the sequence is GRQSQYRRSTNQ. Acidic residues predominate over residues 1107 to 1116; the sequence is QEEEEMDDEA.

The protein belongs to the protein-tyrosine phosphatase family. Non-receptor class dual specificity subfamily.

The protein localises to the cytoplasm. It is found in the myofibril. Its subcellular location is the sarcomere. Functionally, may be required for myofiber maturation. The chain is Serine/threonine/tyrosine-interacting-like protein 2 (Styxl2) from Mus musculus (Mouse).